The chain runs to 122 residues: Large ribosomal subunit protein uL14 (122 aa).

The protein belongs to the universal ribosomal protein uL14 family. Part of the 50S ribosomal subunit. Forms a cluster with proteins L3 and L19. In the 70S ribosome, L14 and L19 interact and together make contacts with the 16S rRNA in bridges B5 and B8.

Functionally, binds to 23S rRNA. Forms part of two intersubunit bridges in the 70S ribosome. This chain is Large ribosomal subunit protein uL14, found in Ruthia magnifica subsp. Calyptogena magnifica.